The sequence spans 131 residues: Small ribosomal subunit protein uS8 (131 aa).

The protein belongs to the universal ribosomal protein uS8 family. In terms of assembly, part of the 30S ribosomal subunit. Contacts proteins S5 and S12.

Functionally, one of the primary rRNA binding proteins, it binds directly to 16S rRNA central domain where it helps coordinate assembly of the platform of the 30S subunit. This Variovorax paradoxus (strain S110) protein is Small ribosomal subunit protein uS8.